Reading from the N-terminus, the 345-residue chain is Serine proteinase inhibitor 2 (345 aa).

The protein belongs to the serpin family. Poxviruses subfamily.

It localises to the host cytoplasm. Viral serpin that inhibits both cysteine and serine proteinases involved in the regulation of host inflammatory and apoptosis processes. Major anti-apoptotic protein which inhibits both intrinsic and extrinsic pathways and strongly cleaves host CASP1 and CASP8 but is a rather poor inhibitor of host CASP3. Prevents the proteolytic activity of host interleukin-1-beta converting enzyme (ICE) and ICE-like enzymes. Can also block apoptosis through host tumor necrosis factor (TNF) receptor. The inhibition of host ICE is an example of a 'cross-class' interaction, in which a serpin inhibits a non-serine proteinase. Also inhibits granzyme B. The chain is Serine proteinase inhibitor 2 (OPG199) from Rabbitpox virus (strain Utrecht) (RPV).